Consider the following 476-residue polypeptide: ATP synthase subunit beta (476 aa).

An ATP-binding site is contributed by 162 to 169 (GGAGVGKT).

Belongs to the ATPase alpha/beta chains family. F-type ATPases have 2 components, CF(1) - the catalytic core - and CF(0) - the membrane proton channel. CF(1) has five subunits: alpha(3), beta(3), gamma(1), delta(1), epsilon(1). CF(0) has three main subunits: a(1), b(2) and c(9-12). The alpha and beta chains form an alternating ring which encloses part of the gamma chain. CF(1) is attached to CF(0) by a central stalk formed by the gamma and epsilon chains, while a peripheral stalk is formed by the delta and b chains.

It localises to the cell membrane. It catalyses the reaction ATP + H2O + 4 H(+)(in) = ADP + phosphate + 5 H(+)(out). Its function is as follows. Produces ATP from ADP in the presence of a proton gradient across the membrane. The catalytic sites are hosted primarily by the beta subunits. In Mycoplasma capricolum subsp. capricolum (strain California kid / ATCC 27343 / NCTC 10154), this protein is ATP synthase subunit beta.